A 192-amino-acid polypeptide reads, in one-letter code: MSKEEFPHEKDLKDEVTPDKAPKKDPKAAPKEEVKENPVENYEKEIAELTAKNKDLEDKYLRSEAEIQNMQARYAKERAQLIKYESQSLAKEVLPAMDNLERALAVKADDEAAKQLQKGVQMTLDSLVKSMKDQGITEIKAEGETFDPSLHQAVQTVAAENDERKDRVVKVLQKGYQYKDRTLRPAMVVVAQ.

Positions 1–41 are disordered; the sequence is MSKEEFPHEKDLKDEVTPDKAPKKDPKAAPKEEVKENPVEN.

This sequence belongs to the GrpE family. Homodimer.

The protein resides in the cytoplasm. Its function is as follows. Participates actively in the response to hyperosmotic and heat shock by preventing the aggregation of stress-denatured proteins, in association with DnaK and GrpE. It is the nucleotide exchange factor for DnaK and may function as a thermosensor. Unfolded proteins bind initially to DnaJ; upon interaction with the DnaJ-bound protein, DnaK hydrolyzes its bound ATP, resulting in the formation of a stable complex. GrpE releases ADP from DnaK; ATP binding to DnaK triggers the release of the substrate protein, thus completing the reaction cycle. Several rounds of ATP-dependent interactions between DnaJ, DnaK and GrpE are required for fully efficient folding. The protein is Protein GrpE of Lactobacillus johnsonii (strain CNCM I-12250 / La1 / NCC 533).